Consider the following 151-residue polypeptide: Transcriptional regulator MraZ (151 aa).

2 SpoVT-AbrB domains span residues 5-52 (ANAI…PLDE) and 81-124 (AVDL…DEDA).

Belongs to the MraZ family. In terms of assembly, forms oligomers.

It is found in the cytoplasm. Its subcellular location is the nucleoid. In Pseudomonas fluorescens (strain Pf0-1), this protein is Transcriptional regulator MraZ.